Consider the following 845-residue polypeptide: MRKHSLDRWLLTAVLVVLLSSSSSFAAKKDAKKKKKSNKEVTYDGTSLIIDGKRELLYSGSIHYPRSTPEMWPSIIKRAKQGGLNTIQTYVFWNVHEPQQGKFNFSGRADLVKFIKLIQKNGMYVTLRLGPFIQAEWTHGGLPYWLREVPGIFFRTDNKQFKEHTERYVRMILDKMKEERLFASQGGPIILGQIENEYSAVQRAYKQDGLNYIKWASNLVDSMKLGIPWVMCKQNDAPDPMINACNGRHCGDTFPGPNRENKPSLWTENWTTQFRVFGDPPTQRSVEDIAYSVARFFSKNGTHVNYYMYHGGTNFGRTSAHYVTTRYYDDAPLDEYGLEKEPKYGHLKHLHNALNLCKKPLLWGQPKTEKPGKDTEIRYYEQPGTKTCAAFLANNNTEAAETIKFKGREYVIAPRSISILPDCKTVVYNTAQIVSQHTSRNFMKSKKANKKFDFKVFTETLPSKLEGNSYIPVELYGLTKDKTDYGWYTTSFKVHKNHLPTKKGVKTFVRIASLGHALHAWLNGEYLGSGHGSHEEKSFVFQKQVTLKAGENHLVMLGVLTGFPDSGSYMEHRYTGPRGISILGLTSGTLDLTESSKWGNKIGMEGEKLGIHTEEGLKKVEWKKFTGKAPGLTWYQTYFDAPESVSAATIRMHGMGKGLIWVNGEGVGRYWQSFLSPLGQPTQIEYHIPRSFLKPKKNLLVIFEEEPNVKPELMDFAIVNRDTVCSYVGENYTPSVRHWTRKKDQVQAITDNVSLTATLKCSGTKKIAAVEFASFGNPIGVCGNFTLGTCNAPVSKQVIEKHCLGKAECVIPVNKSTFQQDKKDSCKNVVKMLAVQVKCGRGKKN.

Residues Met1–Ala26 form the signal peptide. An N-linked (GlcNAc...) asparagine glycan is attached at Asn104. Residue Glu197 is the Proton donor of the active site. The active-site Nucleophile is Glu268. Asn269, Asn300, Asn395, Asn752, Asn784, and Asn814 each carry an N-linked (GlcNAc...) asparagine glycan. Residues Asp751–Gly840 form the SUEL-type lectin domain.

It belongs to the glycosyl hydrolase 35 family.

It localises to the secreted. Its subcellular location is the extracellular space. The protein localises to the apoplast. It catalyses the reaction Hydrolysis of terminal non-reducing beta-D-galactose residues in beta-D-galactosides.. The polypeptide is Beta-galactosidase 11 (BGAL11) (Arabidopsis thaliana (Mouse-ear cress)).